Consider the following 613-residue polypeptide: Cysteine--tRNA ligase (613 aa).

The segment at 1–130 (MSAGAGTPRR…TRGGVARSGN (130 aa)) is disordered. 6 consecutive repeat copies span residues 36 to 49 (PTRG…RPGV), 50 to 63 (PTRG…RLGV), 64 to 77 (PARG…RPGV), 78 to 91 (PARE…RPGV), 92 to 105 (PTRG…RLGV), and 106 to 119 (PARG…RPGV). The interval 36–119 (PTRGDKKRAR…DKKRARRPGV (84 aa)) is 6 X 14 AA tandem repeats of P-[TA]-R-G-D-K-K-R-A-[RP]-R-[PL]-G-V. The cysteinyl-tRNA synthetase stretch occupies residues 148–613 (VTIRLYDTSA…QGPRWSLGSR (466 aa)). Residue C176 participates in Zn(2+) binding. Residues 178–188 (ATVQAAPHIGH) carry the 'HIGH' region motif. C355, H380, and E384 together coordinate Zn(2+). A 'KMSKS' region motif is present at residues 411-415 (KMSKS). Position 414 (K414) interacts with ATP.

It belongs to the class-I aminoacyl-tRNA synthetase family. Monomer. Requires Zn(2+) as cofactor.

It is found in the cytoplasm. It carries out the reaction tRNA(Cys) + L-cysteine + ATP = L-cysteinyl-tRNA(Cys) + AMP + diphosphate. The chain is Cysteine--tRNA ligase from Streptomyces coelicolor (strain ATCC BAA-471 / A3(2) / M145).